We begin with the raw amino-acid sequence, 541 residues long: Tegument protein UL21 homolog (541 aa).

This sequence belongs to the alphaherpesvirinae UL21 protein family. As to quaternary structure, interacts (via C-terminus) with UL16.

Its subcellular location is the virion tegument. The protein resides in the host cytoplasm. It is found in the host nucleus. May participate in DNA packaging/capsid maturation events. Promotes efficient incorporation of tegument proteins UL46, UL49, and US3 homologs into virions. May also play a role in capsid transport to the trans-Golgi network (TGN). The chain is Tegument protein UL21 homolog from Homo sapiens (Human).